Here is a 383-residue protein sequence, read N- to C-terminus: Erythronate-4-phosphate dehydrogenase (383 aa).

The substrate site is built by Ser-45 and Thr-66. Residues Asp-146, Thr-174, 205–207 (ASR), and Asp-231 contribute to the NAD(+) site. The active site involves Arg-207. Glu-236 is an active-site residue. His-253 acts as the Proton donor in catalysis. Residue Gly-256 coordinates NAD(+). A substrate-binding site is contributed by Tyr-257.

It belongs to the D-isomer specific 2-hydroxyacid dehydrogenase family. PdxB subfamily. Homodimer.

The protein resides in the cytoplasm. It catalyses the reaction 4-phospho-D-erythronate + NAD(+) = (R)-3-hydroxy-2-oxo-4-phosphooxybutanoate + NADH + H(+). It participates in cofactor biosynthesis; pyridoxine 5'-phosphate biosynthesis; pyridoxine 5'-phosphate from D-erythrose 4-phosphate: step 2/5. Catalyzes the oxidation of erythronate-4-phosphate to 3-hydroxy-2-oxo-4-phosphonooxybutanoate. The polypeptide is Erythronate-4-phosphate dehydrogenase (Pseudomonas entomophila (strain L48)).